We begin with the raw amino-acid sequence, 649 residues long: MQQDGLGVGTRNGSGKGRSVHPSWPWCAPRPLRYFGRDARARRAQTAAMALLAGGLSRGLGSHPAAAGRDAVVFVWLLLSTWCTAPARAIQVTVSNPYHVVILFQPVTLPCTYQMTSTPTQPIVIWKYKSFCRDRIADAFSPASVDNQLNAQLAAGNPGYNPYVECQDSVRTVRVVATKQGNAVTLGDYYQGRRITITGNADLTFDQTAWGDSGVYYCSVVSAQDLQGNNEAYAELIVLGRTSGVAELLPGFQAGPIEDWLFVVVVCLAAFLIFLLLGICWCQCCPHTCCCYVRCPCCPDKCCCPEALYAAGKAATSGVPSIYAPSTYAHLSPAKTPPPPAMIPMGPAYNGYPGGYPGDVDRSSSAGGQGSYVPLLRDTDSSVASEVRSGYRIQASQQDDSMRVLYYMEKELANFDPSRPGPPSGRVERAMSEVTSLHEDDWRSRPSRGPALTPIRDEEWGGHSPRSPRGWDQEPAREQAGGGWRARRPRARSVDALDDLTPPSTAESGSRSPTSNGGRSRAYMPPRSRSRDDLYDQDDSRDFPRSRDPHYDDFRSRERPPADPRSHHHRTRDPRDNGSRSGDLPYDGRLLEEAVRKKGSEERRRPHKEEEEEAYYPPAPPPYSETDSQASRERRLKKNLALSRESLVV.

The segment covering 1 to 16 (MQQDGLGVGTRNGSGK) has biased composition (gly residues). The segment at 1–21 (MQQDGLGVGTRNGSGKGRSVH) is disordered. Topologically, residues 1–259 (MQQDGLGVGT…PGFQAGPIED (259 aa)) are extracellular. The 149-residue stretch at 86–234 (PARAIQVTVS…DLQGNNEAYA (149 aa)) folds into the Ig-like V-type domain. Cys-111 and Cys-218 form a disulfide bridge. Residues 260–280 (WLFVVVVCLAAFLIFLLLGIC) traverse the membrane as a helical segment. Residues 281-649 (WCQCCPHTCC…LALSRESLVV (369 aa)) are Cytoplasmic-facing. Thr-336 bears the Phosphothreonine mark. 5 positions are modified to phosphoserine: Ser-365, Ser-371, Ser-389, Ser-432, and Ser-436. The segment at 414–649 (NFDPSRPGPP…LALSRESLVV (236 aa)) is disordered. Residues 426 to 444 (RVERAMSEVTSLHEDDWRS) are compositionally biased toward basic and acidic residues. Thr-453 is subject to Phosphothreonine. Residues Ser-464, Ser-467, and Ser-493 each carry the phosphoserine modification. At Thr-501 the chain carries Phosphothreonine. The span at 502 to 518 (PPSTAESGSRSPTSNGG) shows a compositional bias: polar residues. 2 positions are modified to phosphoserine: Ser-528 and Ser-530. Positions 529 to 565 (RSRDDLYDQDDSRDFPRSRDPHYDDFRSRERPPADPR) are enriched in basic and acidic residues. Tyr-535 carries the post-translational modification Phosphotyrosine. Phosphoserine occurs at positions 540 and 579. The segment covering 589–609 (RLLEEAVRKKGSEERRRPHKE) has biased composition (basic and acidic residues). Residue Ser-631 is modified to Phosphoserine. A Glycyl lysine isopeptide (Lys-Gly) (interchain with G-Cter in ubiquitin) cross-link involves residue Lys-638. Phosphoserine occurs at positions 643 and 646.

Belongs to the immunoglobulin superfamily. LISCH7 family. In terms of assembly, homotrimer or homotetramer. Assembles into cell-cell contacts. Interacts (via the cytoplasmic domain) with MARVELD2 (via C-terminal cytoplasmic domain); the interaction is required to recruit MARVELD2 to tricellular contacts. Interacts with OCLN. Phosphorylation at Ser-365 by MAPK8/JNK1 and MAPK9/JNK2 may be required for exclusive localization at tricellular tight junstions. Post-translationally, polyubiquitinated at Lys-638 via 'Lys-63'-linked ubiquitin chains; deubiquitinated by USP53.

The protein resides in the cell membrane. Its subcellular location is the cell junction. It localises to the tight junction. Probable role in the clearance of triglyceride-rich lipoprotein from blood. Binds chylomicrons, LDL and VLDL in presence of free fatty acids and allows their subsequent uptake in the cells. Maintains epithelial barrier function by recruiting MARVELD2/tricellulin to tricellular tight junctions. The sequence is that of Lipolysis-stimulated lipoprotein receptor from Homo sapiens (Human).